Consider the following 662-residue polypeptide: Methyl-accepting chemotaxis protein TlpB (662 aa).

The Cytoplasmic portion of the chain corresponds to 1-16 (MGKFIQWIKQPSISKP). A helical membrane pass occupies residues 17-37 (LIAAFLAVLILPVGVLAYFSY). At 38–281 (QSAWNALDRE…LQDASSPVLN (244 aa)) the chain is on the extracellular side. Positions 153-228 (SEPYTDEATG…KPGTTGSGDW (76 aa)) constitute a Cache domain. A helical membrane pass occupies residues 282-302 (TAVIILCVSIVIGGILILYII). An HAMP domain is found at 303–355 (RAITKPLRKLVSTSAKISSGDLTEVIDIHSKNEFGQLGESFNEMSASLRSVIG). Residues 303–662 (RAITKPLRKL…DITKKFKIES (360 aa)) are Cytoplasmic-facing. E370 carries the glutamate methyl ester (Glu) modification. Residues 374–610 (SAAQTSKATE…EVSSAVEDIS (237 aa)) enclose the Methyl-accepting transducer domain. Position 594 is a glutamate methyl ester (Gln) (Q594). Glutamate methyl ester (Glu) occurs at positions 629 and 636.

The protein belongs to the methyl-accepting chemotaxis (MCP) protein family.

Its subcellular location is the cell membrane. Chemotactic-signal transducers respond to changes in the concentration of attractants and repellents in the environment, transduce a signal from the outside to the inside of the cell, and facilitate sensory adaptation through the variation of the level of methylation. All amino acids serve as attractants in B.subtilis, they appear to cause an increase in the turnover methyl groups, leading to methylation of an unidentified acceptor, while repellents have been shown to cause a decrease in methyl group turnover. The methyl groups are added by a methyltransferase and removed by a methylesterase. This chain is Methyl-accepting chemotaxis protein TlpB (tlpB), found in Bacillus subtilis (strain 168).